Consider the following 315-residue polypeptide: Mitochondrial outer membrane import complex protein METAXIN (315 aa).

Met1 carries the post-translational modification N-acetylmethionine. Residues 157–181 (ENAEQREKQIYKRASEAYEALSTRL) are a coiled coil. The chain crosses the membrane as a helical span at residues 195-215 (LDAFLLSHILFIIQALPVTSV). Positions 240–277 (ASSSSPSPPLHSFPSSFPRKSSKPKSKPKVEKTEEEKK) are disordered. The span at 267–277 (PKVEKTEEEKK) shows a compositional bias: basic and acidic residues. The helical transmembrane segment at 284–304 (FFLAAQFLAVVIYVSVMGGGS) threads the bilayer.

Belongs to the metaxin family. As to quaternary structure, part of a high molecular weight complex that is distinct from the TOM complex. Interacts with a variety of mitochondrial precursor proteins. In terms of tissue distribution, expressed in roots, young cotyledons, flowers and leaves.

It is found in the mitochondrion inner membrane. The protein localises to the mitochondrion outer membrane. Involved in transport of proteins into the mitochondrion. The sequence is that of Mitochondrial outer membrane import complex protein METAXIN (MTX1) from Arabidopsis thaliana (Mouse-ear cress).